Reading from the N-terminus, the 519-residue chain is Xylose import ATP-binding protein XylG (519 aa).

ABC transporter domains follow at residues 6–245 (LTMR…VGRE) and 262–507 (LDVR…LKPA). 38–45 (GENGAGKS) is an ATP binding site.

The protein belongs to the ABC transporter superfamily. Xylose importer (TC 3.A.1.2.4) family. As to quaternary structure, the complex is composed of two ATP-binding proteins (XylG), two transmembrane proteins (XylH) and a solute-binding protein (XylF).

The protein resides in the cell inner membrane. It carries out the reaction D-xylose(out) + ATP + H2O = D-xylose(in) + ADP + phosphate + H(+). Its function is as follows. Part of the ABC transporter complex XylFGH involved in xylose import. Responsible for energy coupling to the transport system. The sequence is that of Xylose import ATP-binding protein XylG from Burkholderia cenocepacia (strain HI2424).